Consider the following 2635-residue polypeptide: Large tegument protein deneddylase (2635 aa).

A deubiquitination activity region spans residues methionine 1–arginine 233. Residues glutamate 9–glutamate 223 form the Peptidase C76 domain. Active-site residues include cysteine 29, aspartate 159, and histidine 161. Disordered regions lie at residues isoleucine 243–alanine 497, proline 2238–lysine 2269, arginine 2357–alanine 2438, and lysine 2500–serine 2533. The span at serine 245–alanine 255 shows a compositional bias: low complexity. Composition is skewed to basic and acidic residues over residues proline 256–proline 270 and proline 282–proline 295. The tract at residues lysine 316–arginine 325 is interaction with inner tegument protein. A compositionally biased stretch (basic and acidic residues) spans proline 330–glutamine 346. A compositionally biased stretch (low complexity) spans aspartate 448–proline 461. Over residues threonine 2379–proline 2402 the composition is skewed to low complexity. Over residues histidine 2425–alanine 2437 the composition is skewed to basic and acidic residues.

The protein belongs to the herpesviridae large tegument protein family. In terms of assembly, interacts with host CUL1 and CUL4A; these interactions inhibit the E3 ligase activity of cullins. Interacts with inner tegument protein. Interacts with capsid vertex specific component CVC2. Interacts with the major capsid protein/MCP.

It localises to the virion tegument. Its subcellular location is the host cytoplasm. The protein localises to the host nucleus. The enzyme catalyses Thiol-dependent hydrolysis of ester, thioester, amide, peptide and isopeptide bonds formed by the C-terminal Gly of ubiquitin (a 76-residue protein attached to proteins as an intracellular targeting signal).. In terms of biological role, large tegument protein that plays multiple roles in the viral cycle. During viral entry, remains associated with the capsid while most of the tegument is detached and participates in the capsid transport toward the host nucleus. Plays a role in the routing of the capsid at the nuclear pore complex and subsequent uncoating. Within the host nucleus, acts as a deneddylase and promotes the degradation of nuclear CRLs (cullin-RING ubiquitin ligases) and thereby stabilizes nuclear CRL substrates, while cytoplasmic CRLs remain unaffected. These modifications prevent host cell cycle S-phase progression and create a favorable environment allowing efficient viral genome replication. Participates later in the secondary envelopment of capsids. Indeed, plays a linker role for the association of the outer viral tegument to the capsids together with the inner tegument protein. This Homo sapiens (Human) protein is Large tegument protein deneddylase.